The following is a 424-amino-acid chain: Double-stranded RNA-binding protein 8 (424 aa).

Positions 1–10 (MDMPPTPLPP) are enriched in pro residues. Residues 1–22 (MDMPPTPLPPETANTSPAPNGA) form a disordered region. 2 consecutive DRBM domains span residues 33-102 (VFKS…EIVK) and 118-185 (LCKN…AIQG). Composition is skewed to basic and acidic residues over residues 287 to 308 (KRVEAEPPRDIEMVQPDKENQH) and 318 to 328 (DEARVEQEPSR). Positions 287-330 (KRVEAEPPRDIEMVQPDKENQHSDAALVQPDDEARVEQEPSRDI) are disordered.

Binds double-stranded RNA. This is Double-stranded RNA-binding protein 8 (DRB8) from Oryza sativa subsp. japonica (Rice).